Consider the following 467-residue polypeptide: Ankyrin repeat and SOCS box protein 10 (467 aa).

7 ANK repeats span residues 115-144 (ELTT…RPDS), 147-176 (GGRT…DPNI), 180-209 (DGKR…RVDG), 214-243 (EEET…CPDA), 247-289 (EGWT…DADA), 293-322 (DKQR…SANT), and 326-361 (GGHT…AVRV). Residues 412 to 464 (YSSLFALVRQPRSLQHLSRCALRSHLEGSLPQALPRLPLPPRLLRYLQLDFEG) enclose the SOCS box domain.

Belongs to the ankyrin SOCS box (ASB) family. As to expression, expressed in the eye. The highest expression is observed in the iris, with moderate levels in the trabecular meshwork (TM), the lamina, and the optic nerve; slightly lower levels in the ciliary body, retina, and choroid; and very low levels in the lens.

Its subcellular location is the cytoplasm. It is found in the nucleus. It participates in protein modification; protein ubiquitination. Its function is as follows. May be a substrate-recognition component of a SCF-like ECS (Elongin-Cullin-SOCS-box protein) E3 ubiquitin-protein ligase complex which mediates the ubiquitination and subsequent proteasomal degradation of target proteins. This is Ankyrin repeat and SOCS box protein 10 (ASB10) from Homo sapiens (Human).